We begin with the raw amino-acid sequence, 190 residues long: Large ribosomal subunit protein eL15 (190 aa).

This sequence belongs to the eukaryotic ribosomal protein eL15 family.

The sequence is that of Large ribosomal subunit protein eL15 (rpl15e) from Nanoarchaeum equitans (strain Kin4-M).